We begin with the raw amino-acid sequence, 912 residues long: Putative respiratory burst oxidase homolog protein J (912 aa).

2 disordered regions span residues methionine 1 to isoleucine 51 and tryptophan 73 to serine 112. Residues methionine 1 to glutamate 323 are Cytoplasmic-facing. Composition is skewed to polar residues over residues serine 29–serine 44 and asparagine 78–serine 87. 2 EF-hand-like regions span residues alanine 147–aspartate 155 and arginine 181–glutamine 193. One can recognise an EF-hand domain in the interval aspartate 205–alanine 240. 5 residues coordinate Ca(2+): aspartate 218, aspartate 220, aspartate 222, lysine 224, and glutamate 229. Position 294 is a phosphoserine (serine 294). The chain crosses the membrane as a helical span at residues histidine 324–tryptophan 344. The Extracellular portion of the chain corresponds to lysine 345–cysteine 363. Residues alanine 364–leucine 384 form a helical membrane-spanning segment. The region spanning lysine 366–isoleucine 523 is the Ferric oxidoreductase domain. Residues arginine 385–lysine 410 are Cytoplasmic-facing. A helical transmembrane segment spans residues leucine 411–asparagine 431. At tyrosine 432–tyrosine 458 the chain is on the extracellular side. The helical transmembrane segment at leucine 459–isoleucine 479 threads the bilayer. Residues serine 480–tyrosine 510 lie on the Cytoplasmic side of the membrane. Residues alanine 511 to isoleucine 531 form a helical membrane-spanning segment. Residues glutamate 532–glutamine 697 lie on the Extracellular side of the membrane. Residues glutamate 562–serine 695 form the FAD-binding FR-type domain. The helical transmembrane segment at lysine 698 to leucine 718 threads the bilayer. Over lysine 719 to phenylalanine 912 the chain is Cytoplasmic.

This sequence belongs to the RBOH (TC 5.B.1.3) family. In terms of assembly, monomer and homodimer.

The protein localises to the membrane. Calcium-dependent NADPH oxidase that generates superoxide. The chain is Putative respiratory burst oxidase homolog protein J (RBOHJ) from Arabidopsis thaliana (Mouse-ear cress).